We begin with the raw amino-acid sequence, 368 residues long: tRNA 2-selenouridine synthase (368 aa).

One can recognise a Rhodanese domain in the interval 15-138; sequence FLNQHPIMDV…LRQYLIGVIE (124 aa). Residue Cys98 is the S-selanylcysteine intermediate of the active site.

Belongs to the SelU family. In terms of assembly, monomer.

The catalysed reaction is 5-methylaminomethyl-2-thiouridine(34) in tRNA + selenophosphate + (2E)-geranyl diphosphate + H2O + H(+) = 5-methylaminomethyl-2-selenouridine(34) in tRNA + (2E)-thiogeraniol + phosphate + diphosphate. It catalyses the reaction 5-methylaminomethyl-2-thiouridine(34) in tRNA + (2E)-geranyl diphosphate = 5-methylaminomethyl-S-(2E)-geranyl-thiouridine(34) in tRNA + diphosphate. It carries out the reaction 5-methylaminomethyl-S-(2E)-geranyl-thiouridine(34) in tRNA + selenophosphate + H(+) = 5-methylaminomethyl-2-(Se-phospho)selenouridine(34) in tRNA + (2E)-thiogeraniol. The enzyme catalyses 5-methylaminomethyl-2-(Se-phospho)selenouridine(34) in tRNA + H2O = 5-methylaminomethyl-2-selenouridine(34) in tRNA + phosphate. In terms of biological role, involved in the post-transcriptional modification of the uridine at the wobble position (U34) of tRNA(Lys), tRNA(Glu) and tRNA(Gln). Catalyzes the conversion of 2-thiouridine (S2U-RNA) to 2-selenouridine (Se2U-RNA). Acts in a two-step process involving geranylation of 2-thiouridine (S2U) to S-geranyl-2-thiouridine (geS2U) and subsequent selenation of the latter derivative to 2-selenouridine (Se2U) in the tRNA chain. In Shewanella baltica (strain OS223), this protein is tRNA 2-selenouridine synthase.